Consider the following 155-residue polypeptide: Transcriptional repressor NrdR (155 aa).

A zinc finger spans residues 3–34 (CPFCGNVDTQVKDSRPAEDHVSIRRRRFCPAC). The ATP-cone domain maps to 49 to 139 (LVVIKTNGKR…VYKNFQAADD (91 aa)).

This sequence belongs to the NrdR family. The cofactor is Zn(2+).

In terms of biological role, negatively regulates transcription of bacterial ribonucleotide reductase nrd genes and operons by binding to NrdR-boxes. The protein is Transcriptional repressor NrdR of Ruegeria sp. (strain TM1040) (Silicibacter sp.).